The sequence spans 329 residues: 4-hydroxythreonine-4-phosphate dehydrogenase (329 aa).

Residues His-136 and Thr-137 each contribute to the substrate site. His-166, His-211, and His-266 together coordinate a divalent metal cation. Substrate-binding residues include Lys-274, Asn-283, and Arg-292.

It belongs to the PdxA family. In terms of assembly, homodimer. The cofactor is Zn(2+). Mg(2+) is required as a cofactor. Co(2+) serves as cofactor.

The protein localises to the cytoplasm. It catalyses the reaction 4-(phosphooxy)-L-threonine + NAD(+) = 3-amino-2-oxopropyl phosphate + CO2 + NADH. The protein operates within cofactor biosynthesis; pyridoxine 5'-phosphate biosynthesis; pyridoxine 5'-phosphate from D-erythrose 4-phosphate: step 4/5. Catalyzes the NAD(P)-dependent oxidation of 4-(phosphooxy)-L-threonine (HTP) into 2-amino-3-oxo-4-(phosphooxy)butyric acid which spontaneously decarboxylates to form 3-amino-2-oxopropyl phosphate (AHAP). The protein is 4-hydroxythreonine-4-phosphate dehydrogenase of Citrobacter koseri (strain ATCC BAA-895 / CDC 4225-83 / SGSC4696).